A 171-amino-acid chain; its full sequence is MSDEILNGAAAPADAAAAGPAFTIEKIYVKDVSFESPNAPAVFNDANQPELQLNLNQKVQRLNDNAFEVVLAVTLTCTAGGKTAYVAEVQQAGVFGLVGLDPQAIDVLLGTQCPNILFPYVRTLVSDLIQAGGFPPFYLQPINFEALYAESVRQRHNESASLADSEPAGNA.

Belongs to the SecB family. As to quaternary structure, homotetramer, a dimer of dimers. One homotetramer interacts with 1 SecA dimer.

Its subcellular location is the cytoplasm. One of the proteins required for the normal export of preproteins out of the cell cytoplasm. It is a molecular chaperone that binds to a subset of precursor proteins, maintaining them in a translocation-competent state. It also specifically binds to its receptor SecA. The polypeptide is Protein-export protein SecB (Xanthomonas oryzae pv. oryzae (strain MAFF 311018)).